We begin with the raw amino-acid sequence, 216 residues long: Imidazole glycerol phosphate synthase subunit HisH (216 aa).

Residues 2–216 (RVAIIDYGSG…LITNFLRWRP (215 aa)) form the Glutamine amidotransferase type-1 domain. The Nucleophile role is filled by cysteine 88. Residues histidine 196 and glutamate 198 contribute to the active site.

Heterodimer of HisH and HisF.

The protein localises to the cytoplasm. It catalyses the reaction 5-[(5-phospho-1-deoxy-D-ribulos-1-ylimino)methylamino]-1-(5-phospho-beta-D-ribosyl)imidazole-4-carboxamide + L-glutamine = D-erythro-1-(imidazol-4-yl)glycerol 3-phosphate + 5-amino-1-(5-phospho-beta-D-ribosyl)imidazole-4-carboxamide + L-glutamate + H(+). It carries out the reaction L-glutamine + H2O = L-glutamate + NH4(+). It functions in the pathway amino-acid biosynthesis; L-histidine biosynthesis; L-histidine from 5-phospho-alpha-D-ribose 1-diphosphate: step 5/9. Its function is as follows. IGPS catalyzes the conversion of PRFAR and glutamine to IGP, AICAR and glutamate. The HisH subunit catalyzes the hydrolysis of glutamine to glutamate and ammonia as part of the synthesis of IGP and AICAR. The resulting ammonia molecule is channeled to the active site of HisF. The protein is Imidazole glycerol phosphate synthase subunit HisH of Mesorhizobium japonicum (strain LMG 29417 / CECT 9101 / MAFF 303099) (Mesorhizobium loti (strain MAFF 303099)).